We begin with the raw amino-acid sequence, 710 residues long: Adenylosuccinate synthetase (710 aa).

Disordered stretches follow at residues 1–51 (MPVR…PVPQ) and 84–111 (DEPPHGSQKSLSVAPYTANASSSSGRSK). Composition is skewed to polar residues over residues 10–27 (YNNSSPGVSNALSPSTTA) and 101–111 (ANASSSSGRSK). GTP-binding positions include 180–186 (GDEGKGK) and 210–212 (GHT). Catalysis depends on Asp181, which acts as the Proton acceptor. Positions 181 and 210 each coordinate Mg(2+). Residues 181–184 (DEGK), 208–211 (NAGH), Thr295, Lys309, Gln421, Thr437, and Lys567 each bind IMP. His211 acts as the Proton donor in catalysis. 563–569 (AVTKKPR) is a substrate binding site. GTP is bound by residues Arg569 and 697–699 (GNG).

The protein belongs to the adenylosuccinate synthetase family. In terms of assembly, homodimer. It depends on Mg(2+) as a cofactor.

It localises to the cytoplasm. It catalyses the reaction IMP + L-aspartate + GTP = N(6)-(1,2-dicarboxyethyl)-AMP + GDP + phosphate + 2 H(+). Its pathway is purine metabolism; AMP biosynthesis via de novo pathway; AMP from IMP: step 1/2. Functionally, plays an important role in the salvage pathway for purine nucleotide biosynthesis. Catalyzes the first committed step in the biosynthesis of AMP from IMP. The sequence is that of Adenylosuccinate synthetase from Leishmania infantum.